A 235-amino-acid chain; its full sequence is Large ribosomal subunit protein uL1 (235 aa).

This sequence belongs to the universal ribosomal protein uL1 family. Part of the 50S ribosomal subunit.

Its function is as follows. Binds directly to 23S rRNA. The L1 stalk is quite mobile in the ribosome, and is involved in E site tRNA release. Protein L1 is also a translational repressor protein, it controls the translation of the L11 operon by binding to its mRNA. This chain is Large ribosomal subunit protein uL1, found in Prochlorococcus marinus (strain NATL1A).